A 710-amino-acid chain; its full sequence is Protein CNGC15a (710 aa).

The next 6 helical transmembrane spans lie at 85-105 (IFLAACLISLFVDPLFFYLPV), 115-135 (SIGLEVSLTIIRTFVDAFYII), 174-194 (LWSDLVAALPLPQVLIWAVIP), 207-226 (VVRLVSIFQYLLRLYLIYPL), 248-268 (YLTLYMLASHVLGSTWYLLSI), and 368-388 (AEINFAVIVAILGLVLFALLI). Residue 474–559 (LFDQMDDRML…WALDPRPTAV (86 aa)) coordinates a nucleoside 3',5'-cyclic phosphate.

It belongs to the cyclic nucleotide-gated cation channel (TC 1.A.1.5) family. Interacts (via N-terminus) with DMI1 (via c-terminus). The Nod factor has no effect on this interaction, implying that the complex is maintained after activation. As to expression, expressed in roots, stems, leaves, flowers and pods.

The protein resides in the nucleus membrane. Functionally, cyclic nucleotide-gated channel involved in the establishment of both rhizobial and mycorrhizal associations. Required for full activation of nuclear-localized Ca(2+) oscillations by Nod and Myc factors. Simultaneous activation of the K(+)-permeable channel DMI1 and the Ca(2+) channel CNGC15 can give rise to sustained Ca(2+) oscillations. May function during fertilization in both female and male gametophytic Ca(2+) signaling. This is Protein CNGC15a from Medicago truncatula (Barrel medic).